The primary structure comprises 655 residues: Macrolide export ATP-binding/permease protein MacB (655 aa).

Residues 6–244 form the ABC transporter domain; sequence IELRDVWREF…DALAGDEGPE (239 aa). Residue 42–49 participates in ATP binding; it reads GASGSGKS. The tract at residues 225 to 252 is disordered; sequence DQARPDAPPLDALAGDEGPEAPRPAPQP. The next 4 membrane-spanning stretches (helical) occupy residues 280–300, 527–547, 583–603, and 620–640; these read LTML…ALGA, LTLL…IGVM, VLVC…IGVL, and SMVL…FLPA.

It belongs to the ABC transporter superfamily. Macrolide exporter (TC 3.A.1.122) family. As to quaternary structure, homodimer.

The protein resides in the cell inner membrane. In terms of biological role, non-canonical ABC transporter that contains transmembrane domains (TMD), which form a pore in the inner membrane, and an ATP-binding domain (NBD), which is responsible for energy generation. Confers resistance against macrolides. In Bordetella avium (strain 197N), this protein is Macrolide export ATP-binding/permease protein MacB.